The sequence spans 1182 residues: Rho guanine nucleotide exchange factor osg-1 (1182 aa).

Positions 1-12 (MLNPNDADDSDS) are enriched in acidic residues. Residues 1-96 (MLNPNDADDS…TNSEPNVDMP (96 aa)) form a disordered region. The segment covering 29-41 (ATVSPSTRNSFYN) has biased composition (polar residues). Over residues 69 to 78 (ASRERSESRR) the composition is skewed to basic and acidic residues. The DH domain occupies 357-544 (VRHLAARELL…HCLAVAINQH (188 aa)). Residues 637–669 (EDVQISKDTLSQLEEVERKLESSREDDRVLKKM) adopt a coiled-coil conformation. The interval 863–884 (INSSGSDTESSSDEGTSTAGQT) is disordered. Residues 865-879 (SSGSDTESSSDEGTS) show a composition bias toward low complexity. Residues 897 to 922 (VVNSTERVRSRARDRLARLRNSITSI) are a coiled coil.

As to expression, expressed in muscles in the body wall and head, and in the nervous system in neurons including FLP and ASE neurons in the head.

Its function is as follows. Probable guanine nucleotide exchange factor which regulates the Rho GTPase rho-1. Functions in ASE sensory neurons where it promotes neuronal degeneration under conditions of oxidative stress. The polypeptide is Rho guanine nucleotide exchange factor osg-1 (Caenorhabditis elegans).